The sequence spans 98 residues: UPF0251 protein SO_0727 (98 aa).

The protein belongs to the UPF0251 family.

In Shewanella oneidensis (strain ATCC 700550 / JCM 31522 / CIP 106686 / LMG 19005 / NCIMB 14063 / MR-1), this protein is UPF0251 protein SO_0727.